The following is a 188-amino-acid chain: Pyridoxal 5'-phosphate synthase subunit PdxT (188 aa).

G46–S48 contributes to the L-glutamine binding site. Catalysis depends on C78, which acts as the Nucleophile. L-glutamine-binding positions include R105 and I134–R135. Active-site charge relay system residues include H170 and E172.

The protein belongs to the glutaminase PdxT/SNO family. As to quaternary structure, in the presence of PdxS, forms a dodecamer of heterodimers. Only shows activity in the heterodimer.

It catalyses the reaction aldehydo-D-ribose 5-phosphate + D-glyceraldehyde 3-phosphate + L-glutamine = pyridoxal 5'-phosphate + L-glutamate + phosphate + 3 H2O + H(+). It carries out the reaction L-glutamine + H2O = L-glutamate + NH4(+). The protein operates within cofactor biosynthesis; pyridoxal 5'-phosphate biosynthesis. In terms of biological role, catalyzes the hydrolysis of glutamine to glutamate and ammonia as part of the biosynthesis of pyridoxal 5'-phosphate. The resulting ammonia molecule is channeled to the active site of PdxS. The polypeptide is Pyridoxal 5'-phosphate synthase subunit PdxT (Moorella thermoacetica (strain ATCC 39073 / JCM 9320)).